A 112-amino-acid polypeptide reads, in one-letter code: Nucleoid-associated protein BCI_0116 (112 aa).

Belongs to the YbaB/EbfC family. As to quaternary structure, homodimer.

The protein resides in the cytoplasm. Its subcellular location is the nucleoid. Functionally, binds to DNA and alters its conformation. May be involved in regulation of gene expression, nucleoid organization and DNA protection. The protein is Nucleoid-associated protein BCI_0116 of Baumannia cicadellinicola subsp. Homalodisca coagulata.